A 392-amino-acid polypeptide reads, in one-letter code: Methylthioribose kinase (392 aa).

Residues asparagine 38, lysine 53, and 107-109 (EDL) contribute to the ATP site. Aspartate 225 is a binding site for substrate. 242–244 (DPE) lines the ATP pocket. Residue arginine 332 coordinates substrate.

The protein belongs to the methylthioribose kinase family. Homodimer.

The enzyme catalyses 5-(methylsulfanyl)-D-ribose + ATP = 5-(methylsulfanyl)-alpha-D-ribose 1-phosphate + ADP + H(+). The protein operates within amino-acid biosynthesis; L-methionine biosynthesis via salvage pathway; S-methyl-5-thio-alpha-D-ribose 1-phosphate from S-methyl-5'-thioadenosine (hydrolase route): step 2/2. In terms of biological role, catalyzes the phosphorylation of methylthioribose into methylthioribose-1-phosphate. The sequence is that of Methylthioribose kinase from Bacillus mycoides (strain KBAB4) (Bacillus weihenstephanensis).